A 170-amino-acid polypeptide reads, in one-letter code: Adenine phosphoribosyltransferase (170 aa).

It belongs to the purine/pyrimidine phosphoribosyltransferase family. In terms of assembly, homodimer.

The protein resides in the cytoplasm. The enzyme catalyses AMP + diphosphate = 5-phospho-alpha-D-ribose 1-diphosphate + adenine. The protein operates within purine metabolism; AMP biosynthesis via salvage pathway; AMP from adenine: step 1/1. Catalyzes a salvage reaction resulting in the formation of AMP, that is energically less costly than de novo synthesis. The sequence is that of Adenine phosphoribosyltransferase from Bacillus cereus (strain G9842).